Reading from the N-terminus, the 896-residue chain is Zinc finger protein 574 (896 aa).

C2H2-type zinc fingers lie at residues 16–38 (YVCS…QNSH), 76–98 (YQCL…QELH), and 126–148 (YECV…RQTH). At S164 the chain carries Phosphoserine. Residues 214 to 236 (YKCSECSQLFQLPADFLEHQATH) form a C2H2-type 4 zinc finger. Residues 239–301 (APVPESQEPA…RARRNNSGEA (63 aa)) are disordered. Polar residues predominate over residues 247 to 257 (PALQQEVQASS). Residues 274-287 (HSYELRNGEAIGRD) show a composition bias toward basic and acidic residues. Phosphoserine is present on S298. 4 consecutive C2H2-type zinc fingers follow at residues 309-331 (LFCS…LRSH), 336-358 (FKCP…LGDH), 364-386 (FLCV…RRAH), and 392-413 (HSCP…RRTH). Positions 434 to 460 (FPEPAPAETGEPEAPEPPVSEETSAGP) are disordered. 6 consecutive C2H2-type zinc fingers follow at residues 466-489 (YRCL…RFVH), 495-517 (HKCS…LRTH), 523-545 (FPCP…RLTH), 551-573 (YRCG…RLVH), 579-601 (YRCQ…RYHH), and 607-630 (YKCR…LVVH). A C2H2-type 15; degenerate zinc finger spans residues 636 to 659 (HRCPSCGAAFPSSLRLREHRCAAA). A C2H2-type 16 zinc finger spans residues 667–689 (FECGTCGKKVGSAARLQAHEAAH). Residues 687-733 (AAHAAAGPGEVLAKEPPAPRAPRATRAPVASPAGLGGTATASPAAPA) form a disordered region. Positions 707-732 (APRATRAPVASPAGLGGTATASPAAP) are enriched in low complexity. S717 is subject to Phosphoserine. T724 carries the post-translational modification Phosphothreonine. S728 carries the post-translational modification Phosphoserine. 4 consecutive C2H2-type zinc fingers follow at residues 738 to 760 (LECS…RRIH), 766 to 788 (YPCP…RRLH), 794 to 816 (FACE…RRIH), and 822 to 844 (YSCP…RKTH). Position 832 is an asymmetric dimethylarginine (R832).

It belongs to the krueppel C2H2-type zinc-finger protein family.

The protein localises to the nucleus. May be involved in transcriptional regulation. In Macaca fascicularis (Crab-eating macaque), this protein is Zinc finger protein 574 (ZNF574).